The chain runs to 146 residues: Histone H2B (146 aa).

Residues 1 to 16 (MAPRADKKPAEKKPGA) are compositionally biased toward basic and acidic residues. The disordered stretch occupies residues 1–52 (MAPRADKKPAEKKPGAEKTPVAEKAPAEKKPRAGKKLPRDAGAAGDKKKKRA). An N6-acetyllysine mark is found at lysine 7, lysine 35, and lysine 36. Residue lysine 142 forms a Glycyl lysine isopeptide (Lys-Gly) (interchain with G-Cter in ubiquitin) linkage.

Belongs to the histone H2B family. The nucleosome is a histone octamer containing two molecules each of H2A, H2B, H3 and H4 assembled in one H3-H4 heterotetramer and two H2A-H2B heterodimers. The octamer wraps approximately 147 bp of DNA. In terms of processing, can be acetylated to form H2BK6ac, H2BK33ac and H2BK34ac. Post-translationally, monoubiquitinated to form H2BK143ub1; may give a specific tag for epigenetic transcriptional activation.

Its subcellular location is the nucleus. It is found in the chromosome. Core component of nucleosome. Nucleosomes wrap and compact DNA into chromatin, limiting DNA accessibility to the cellular machineries which require DNA as a template. Histones thereby play a central role in transcription regulation, DNA repair, DNA replication and chromosomal stability. DNA accessibility is regulated via a complex set of post-translational modifications of histones, also called histone code, and nucleosome remodeling. This is Histone H2B (HIS2B) from Nicotiana tabacum (Common tobacco).